The following is a 466-amino-acid chain: UDP-N-acetylmuramoylalanine--D-glutamate ligase (466 aa).

ATP is bound at residue 121–127; it reads GTNGKST.

This sequence belongs to the MurCDEF family.

It is found in the cytoplasm. It catalyses the reaction UDP-N-acetyl-alpha-D-muramoyl-L-alanine + D-glutamate + ATP = UDP-N-acetyl-alpha-D-muramoyl-L-alanyl-D-glutamate + ADP + phosphate + H(+). The protein operates within cell wall biogenesis; peptidoglycan biosynthesis. Cell wall formation. Catalyzes the addition of glutamate to the nucleotide precursor UDP-N-acetylmuramoyl-L-alanine (UMA). In Mesorhizobium japonicum (strain LMG 29417 / CECT 9101 / MAFF 303099) (Mesorhizobium loti (strain MAFF 303099)), this protein is UDP-N-acetylmuramoylalanine--D-glutamate ligase.